The primary structure comprises 691 residues: Elongation factor G (691 aa).

One can recognise a tr-type G domain in the interval 10–284 (KMYRNIGIMA…AIVKYLPSPL (275 aa)). Residues 19–26 (AHIDAGKT), 83–87 (DTPGH), and 137–140 (NKMD) contribute to the GTP site.

Belongs to the TRAFAC class translation factor GTPase superfamily. Classic translation factor GTPase family. EF-G/EF-2 subfamily.

The protein localises to the cytoplasm. Its function is as follows. Catalyzes the GTP-dependent ribosomal translocation step during translation elongation. During this step, the ribosome changes from the pre-translocational (PRE) to the post-translocational (POST) state as the newly formed A-site-bound peptidyl-tRNA and P-site-bound deacylated tRNA move to the P and E sites, respectively. Catalyzes the coordinated movement of the two tRNA molecules, the mRNA and conformational changes in the ribosome. This chain is Elongation factor G, found in Clostridium tetani (strain Massachusetts / E88).